Here is a 349-residue protein sequence, read N- to C-terminus: GTP 3',8-cyclase (349 aa).

The 226-residue stretch at Pro-24 to Pro-249 folds into the Radical SAM core domain. Position 33 (Arg-33) interacts with GTP. [4Fe-4S] cluster-binding residues include Cys-40 and Cys-44. Tyr-46 is an S-adenosyl-L-methionine binding site. Cys-47 lines the [4Fe-4S] cluster pocket. Arg-82 contacts GTP. Residue Gly-86 participates in S-adenosyl-L-methionine binding. Thr-116 serves as a coordination point for GTP. Residue Ser-140 coordinates S-adenosyl-L-methionine. Lys-176 provides a ligand contact to GTP. Met-210 contacts S-adenosyl-L-methionine. [4Fe-4S] cluster-binding residues include Cys-273 and Cys-276. A GTP-binding site is contributed by Arg-278–Arg-280. Cys-290 is a [4Fe-4S] cluster binding site.

Belongs to the radical SAM superfamily. MoaA family. As to quaternary structure, monomer and homodimer. Requires [4Fe-4S] cluster as cofactor.

The enzyme catalyses GTP + AH2 + S-adenosyl-L-methionine = (8S)-3',8-cyclo-7,8-dihydroguanosine 5'-triphosphate + 5'-deoxyadenosine + L-methionine + A + H(+). It participates in cofactor biosynthesis; molybdopterin biosynthesis. Catalyzes the cyclization of GTP to (8S)-3',8-cyclo-7,8-dihydroguanosine 5'-triphosphate. The chain is GTP 3',8-cyclase from Sinorhizobium medicae (strain WSM419) (Ensifer medicae).